Reading from the N-terminus, the 292-residue chain is Elongation factor Ts (292 aa).

The involved in Mg(2+) ion dislocation from EF-Tu stretch occupies residues 79–82; the sequence is TDFV.

The protein belongs to the EF-Ts family.

The protein localises to the cytoplasm. Its function is as follows. Associates with the EF-Tu.GDP complex and induces the exchange of GDP to GTP. It remains bound to the aminoacyl-tRNA.EF-Tu.GTP complex up to the GTP hydrolysis stage on the ribosome. This chain is Elongation factor Ts (tsf), found in Idiomarina loihiensis (strain ATCC BAA-735 / DSM 15497 / L2-TR).